A 612-amino-acid polypeptide reads, in one-letter code: uncharacterized protein (612 aa).

The stretch at 39–100 forms a coiled coil; sequence ERDHNLWEIE…KNISVKDLDE (62 aa). Residues 219 to 241 are disordered; that stretch reads PLSSGESLPKKEEEVTKSPSFTL. WD repeat units follow at residues 286–325, 337–376, 389–432, 434–470, 483–523, 526–565, and 574–612; these read TSTQCITHQPLPGSTPSFASGTENGVINVWRLDEDSNDNS, GHEGPVLCVCVPKATHHIFSGGHDGTIRCWSLPANQTSDS, GHED…FKIR, DSKQPLSMSVTDSRIAIAYNDGNVRFYDLDTQILVSQ, AVKD…LLAE, ISKVSLTGIAFAVNRPEFAISASDGRVFFLRQDDKLSTLE, and EEITDLSDILWINSPVDKLEHLIVGCKERISVYDRKYLP.

The protein resides in the cytoplasm. This is an uncharacterized protein from Schizosaccharomyces pombe (strain 972 / ATCC 24843) (Fission yeast).